Consider the following 123-residue polypeptide: Putative hypoxanthine phosphoribosyltransferase (123 aa).

Its function is as follows. May play a role in purine salvage. The protein is Putative hypoxanthine phosphoribosyltransferase of Methanosarcina mazei (strain ATCC BAA-159 / DSM 3647 / Goe1 / Go1 / JCM 11833 / OCM 88) (Methanosarcina frisia).